Here is a 263-residue protein sequence, read N- to C-terminus: Endonuclease 8 (263 aa).

P2 serves as the catalytic Schiff-base intermediate with DNA. The active-site Proton donor is the E3. The active-site Proton donor; for beta-elimination activity is K53. Positions 70, 125, and 169 each coordinate DNA. The segment at 229 to 263 (KVFHRDGERCERCGGIIEKTTLSSRPFYWCPGCQH) adopts an FPG-type zinc-finger fold. Catalysis depends on R253, which acts as the Proton donor; for delta-elimination activity.

The protein belongs to the FPG family. Requires Zn(2+) as cofactor.

It carries out the reaction 2'-deoxyribonucleotide-(2'-deoxyribose 5'-phosphate)-2'-deoxyribonucleotide-DNA = a 3'-end 2'-deoxyribonucleotide-(2,3-dehydro-2,3-deoxyribose 5'-phosphate)-DNA + a 5'-end 5'-phospho-2'-deoxyribonucleoside-DNA + H(+). Its function is as follows. Involved in base excision repair of DNA damaged by oxidation or by mutagenic agents. Acts as a DNA glycosylase that recognizes and removes damaged bases. Has a preference for oxidized pyrimidines, such as thymine glycol, 5,6-dihydrouracil and 5,6-dihydrothymine. Has AP (apurinic/apyrimidinic) lyase activity and introduces nicks in the DNA strand. Cleaves the DNA backbone by beta-delta elimination to generate a single-strand break at the site of the removed base with both 3'- and 5'-phosphates. In Klebsiella pneumoniae subsp. pneumoniae (strain ATCC 700721 / MGH 78578), this protein is Endonuclease 8.